Reading from the N-terminus, the 168-residue chain is Crossover junction endodeoxyribonuclease RuvC (168 aa).

Active-site residues include Asp11, Glu71, and Asp144. Positions 11, 71, and 144 each coordinate Mg(2+).

Belongs to the RuvC family. In terms of assembly, homodimer which binds Holliday junction (HJ) DNA. The HJ becomes 2-fold symmetrical on binding to RuvC with unstacked arms; it has a different conformation from HJ DNA in complex with RuvA. In the full resolvosome a probable DNA-RuvA(4)-RuvB(12)-RuvC(2) complex forms which resolves the HJ. It depends on Mg(2+) as a cofactor.

The protein localises to the cytoplasm. The catalysed reaction is Endonucleolytic cleavage at a junction such as a reciprocal single-stranded crossover between two homologous DNA duplexes (Holliday junction).. The RuvA-RuvB-RuvC complex processes Holliday junction (HJ) DNA during genetic recombination and DNA repair. Endonuclease that resolves HJ intermediates. Cleaves cruciform DNA by making single-stranded nicks across the HJ at symmetrical positions within the homologous arms, yielding a 5'-phosphate and a 3'-hydroxyl group; requires a central core of homology in the junction. The consensus cleavage sequence is 5'-(A/T)TT(C/G)-3'. Cleavage occurs on the 3'-side of the TT dinucleotide at the point of strand exchange. HJ branch migration catalyzed by RuvA-RuvB allows RuvC to scan DNA until it finds its consensus sequence, where it cleaves and resolves the cruciform DNA. The chain is Crossover junction endodeoxyribonuclease RuvC from Protochlamydia amoebophila (strain UWE25).